We begin with the raw amino-acid sequence, 386 residues long: 8-amino-7-oxononanoate synthase (386 aa).

R31 contributes to the substrate binding site. 109–110 is a binding site for pyridoxal 5'-phosphate; that stretch reads GY. H134 lines the substrate pocket. Residues S180, 205-208, and 236-239 each bind pyridoxal 5'-phosphate; these read DEAH and TLSK. K239 is subject to N6-(pyridoxal phosphate)lysine. Position 349 (T349) interacts with substrate.

Belongs to the class-II pyridoxal-phosphate-dependent aminotransferase family. BioF subfamily. Homodimer. The cofactor is pyridoxal 5'-phosphate.

The enzyme catalyses 6-carboxyhexanoyl-[ACP] + L-alanine + H(+) = (8S)-8-amino-7-oxononanoate + holo-[ACP] + CO2. Its pathway is cofactor biosynthesis; biotin biosynthesis. Its function is as follows. Catalyzes the decarboxylative condensation of pimeloyl-[acyl-carrier protein] and L-alanine to produce 8-amino-7-oxononanoate (AON), [acyl-carrier protein], and carbon dioxide. This is 8-amino-7-oxononanoate synthase from Mycobacterium bovis (strain ATCC BAA-935 / AF2122/97).